A 598-amino-acid polypeptide reads, in one-letter code: Elongation factor 4 (598 aa).

The tr-type G domain maps to 2-184 (DHIRNFSIIA…AIVKRVPPPR (183 aa)). Residues 14 to 19 (DHGKST) and 131 to 134 (NKID) each bind GTP.

This sequence belongs to the TRAFAC class translation factor GTPase superfamily. Classic translation factor GTPase family. LepA subfamily.

It localises to the cell inner membrane. The enzyme catalyses GTP + H2O = GDP + phosphate + H(+). Functionally, required for accurate and efficient protein synthesis under certain stress conditions. May act as a fidelity factor of the translation reaction, by catalyzing a one-codon backward translocation of tRNAs on improperly translocated ribosomes. Back-translocation proceeds from a post-translocation (POST) complex to a pre-translocation (PRE) complex, thus giving elongation factor G a second chance to translocate the tRNAs correctly. Binds to ribosomes in a GTP-dependent manner. The protein is Elongation factor 4 of Syntrophus aciditrophicus (strain SB).